The primary structure comprises 196 residues: Large ribosomal subunit protein bL9c (196 aa).

A chloroplast-targeting transit peptide spans 1 to 41 (MASTTSTLSLSWSNSFHSFAGAISEPQKSPENCRVMLPIVA).

Component of the chloroplast large ribosomal subunit (LSU). Mature 70S chloroplast ribosomes of higher plants consist of a small (30S) and a large (50S) subunit. The 30S small subunit contains 1 molecule of ribosomal RNA (16S rRNA) and 24 different proteins. The 50S large subunit contains 3 rRNA molecules (23S, 5S and 4.5S rRNA) and 33 different proteins.

Its subcellular location is the plastid. The protein localises to the chloroplast. Component of the chloroplast ribosome (chloro-ribosome), a dedicated translation machinery responsible for the synthesis of chloroplast genome-encoded proteins, including proteins of the transcription and translation machinery and components of the photosynthetic apparatus. In Spinacia oleracea (Spinach), this protein is Large ribosomal subunit protein bL9c (RPL9).